We begin with the raw amino-acid sequence, 366 residues long: 5-amino-6-(D-ribitylamino)uracil--L-tyrosine 4-hydroxyphenyl transferase (366 aa).

The region spanning 51-290 (RCGNAITWVK…MIAISRLFLD (240 aa)) is the Radical SAM core domain. [4Fe-4S] cluster is bound by residues C70, C74, and C77.

It belongs to the radical SAM superfamily. CofH family. As to quaternary structure, consists of two subunits, CofG and CofH. Requires [4Fe-4S] cluster as cofactor.

The catalysed reaction is 5-amino-6-(D-ribitylamino)uracil + L-tyrosine + S-adenosyl-L-methionine = 5-amino-5-(4-hydroxybenzyl)-6-(D-ribitylimino)-5,6-dihydrouracil + 2-iminoacetate + 5'-deoxyadenosine + L-methionine + H(+). It functions in the pathway cofactor biosynthesis; coenzyme F0 biosynthesis. Its function is as follows. Catalyzes the radical-mediated synthesis of 5-amino-5-(4-hydroxybenzyl)-6-(D-ribitylimino)-5,6-dihydrouracil from 5-amino-6-(D-ribitylamino)uracil and L-tyrosine. This chain is 5-amino-6-(D-ribitylamino)uracil--L-tyrosine 4-hydroxyphenyl transferase, found in Methanospirillum hungatei JF-1 (strain ATCC 27890 / DSM 864 / NBRC 100397 / JF-1).